The primary structure comprises 147 residues: Hemoglobin anodic subunit beta (147 aa).

In terms of domain architecture, Globin spans 2-147 (EWTDGERTAI…VTSALARQYH (146 aa)). Heme b contacts are provided by His-63 and His-92.

It belongs to the globin family. In terms of assembly, heterotetramer of two alpha chains and two beta chains. In terms of tissue distribution, red blood cells.

Its function is as follows. Involved in oxygen transport from gills to the various peripheral tissues. This is Hemoglobin anodic subunit beta from Gymnothorax unicolor (Brown moray).